A 257-amino-acid polypeptide reads, in one-letter code: UPF0246 protein Shew185_1115 (257 aa).

The protein belongs to the UPF0246 family.

The protein is UPF0246 protein Shew185_1115 of Shewanella baltica (strain OS185).